The following is a 131-amino-acid chain: Small ribosomal subunit protein uS8 (131 aa).

This sequence belongs to the universal ribosomal protein uS8 family. In terms of assembly, part of the 30S ribosomal subunit. Contacts proteins S5 and S12.

Its function is as follows. One of the primary rRNA binding proteins, it binds directly to 16S rRNA central domain where it helps coordinate assembly of the platform of the 30S subunit. This Helicobacter pylori (strain P12) protein is Small ribosomal subunit protein uS8.